A 115-amino-acid chain; its full sequence is MNACVLSVLCLLGAVAVLVEGVTVQDGDLSFPLESVKQLKDLREVQEPRLASHKKFAPRLLKPVAPQLCSQSAFPEALRPLCEKPNAEEILQRLEAIAQDPNTCEICAYAACTGC.

The signal sequence occupies residues 1–21 (MNACVLSVLCLLGAVAVLVEG). Positions 22–100 (VTVQDGDLSF…LQRLEAIAQD (79 aa)) are excised as a propeptide. 3 cysteine pairs are disulfide-bonded: cysteine 69-cysteine 82, cysteine 104-cysteine 112, and cysteine 107-cysteine 115.

It belongs to the guanylin family.

Its subcellular location is the secreted. Endogenous activator of intestinal guanylate cyclase. It stimulates this enzyme through the same receptor binding region as the heat-stable enterotoxins. In Notomys alexis (Spinifex hopping mouse), this protein is Guanylin (GUCA2A).